The following is a 327-amino-acid chain: Selenate reductase subunit beta (327 aa).

4Fe-4S ferredoxin-type domains follow at residues leucine 6–arginine 35, asparagine 124–glutamate 155, and glycine 157–glutamine 186. Positions 15, 18, 21, 25, 133, 136, and 141 each coordinate [4Fe-4S] cluster. [3Fe-4S] cluster-binding residues include cysteine 145, cysteine 166, and cysteine 172. [4Fe-4S] cluster-binding residues include cysteine 176, cysteine 193, cysteine 196, cysteine 208, and cysteine 212.

Heterotrimer of alpha (SerA), beta (SerB) and gamma (SerC) subunits. [3Fe-4S] cluster serves as cofactor. [4Fe-4S] cluster is required as a cofactor.

It localises to the periplasm. The catalysed reaction is selenite + 2 Fe(III)-[cytochrome c] + H2O = 2 Fe(II)-[cytochrome] + selenate + 2 H(+). Its activity is regulated as follows. Enzyme isolated from cells grown in a tungstate rich environment shows a 20-fold reduction in selenate reductase activity. In terms of biological role, component of the selenate reductase, which catalyzes the reduction of selenate to selenite and allows anaerobic growth with selenate as the sole terminal electron acceptor. A c-type di-heme cytochrome of the cytc4 family was shown to donate electrons to the selenate reductase in vitro. SerABC can also use reduced benzyl viologen or reduced methyl viologen as an electron donor. This subunit transfers electrons from SerC to SerA. The reductase is specific for selenate, and cannot reduce nitrate, nitrite, chlorate or sulfate. This chain is Selenate reductase subunit beta, found in Thauera selenatis.